A 595-amino-acid chain; its full sequence is APOBEC1 complementation factor (595 aa).

3 RRM domains span residues 56-134, 136-218, and 231-303; these read CEIF…ASVD, CRLF…WAEP, and KILY…LAKP. The segment at 360 to 409 is required for nuclear localization; that stretch reads HFPATKGHLSNRALIRTPSVREIYMNVPVGAAGVRGLGGRGYLAYTGLGR.

As to quaternary structure, part of the apolipoprotein B mRNA editing complex with APOBEC1. Interacts with TNPO2; TNPO2 may be responsible for transport of A1CF into the nucleus. Interacts with SYNCRIP. Interacts with CELF2/CUGBP2. Interacts with RBM47. Expressed primarily in liver, small intestine and kidney.

The protein resides in the nucleus. The protein localises to the endoplasmic reticulum. Its subcellular location is the cytoplasm. Essential component of the apolipoprotein B mRNA editing enzyme complex which is responsible for the postranscriptional editing of a CAA codon for Gln to a UAA codon for stop in APOB mRNA. Binds to APOB mRNA and is probably responsible for docking the catalytic subunit, APOBEC1, to the mRNA to allow it to deaminate its target cytosine. The complex also seems to protect the edited APOB mRNA from nonsense-mediated decay. This is APOBEC1 complementation factor (A1cf) from Mus musculus (Mouse).